Here is a 314-residue protein sequence, read N- to C-terminus: Cytochrome c biogenesis protein CcsA (314 aa).

The next 8 helical transmembrane spans lie at 15-35 (VSFI…ISLI), 48-68 (LITI…WIIS), 73-93 (ISNL…GQLL), 102-122 (IIPA…CFVL), 148-168 (VMLS…VLFI), 216-236 (SILV…IWAN), 250-267 (TWAF…HMRI), and 277-297 (ALLA…VNFL).

It belongs to the CcmF/CycK/Ccl1/NrfE/CcsA family. May interact with ccs1.

It is found in the cellular thylakoid membrane. Functionally, required during biogenesis of c-type cytochromes (cytochrome c6 and cytochrome f) at the step of heme attachment. The polypeptide is Cytochrome c biogenesis protein CcsA (Prochlorococcus marinus subsp. pastoris (strain CCMP1986 / NIES-2087 / MED4)).